A 440-amino-acid chain; its full sequence is GTPase Der (440 aa).

2 consecutive EngA-type G domains span residues 5–167 (ATVA…PEQE) and 178–353 (IMLS…KEHS). GTP-binding positions include 11-18 (GRPNVGKS), 58-62 (DTGGI), 120-123 (NKSE), 184-191 (GRPNVGKS), 231-235 (DTAGL), and 296-299 (NKWD). Positions 354 to 438 (KRITTADVNR…PIRILERVKQ (85 aa)) constitute a KH-like domain.

It belongs to the TRAFAC class TrmE-Era-EngA-EngB-Septin-like GTPase superfamily. EngA (Der) GTPase family. As to quaternary structure, associates with the 50S ribosomal subunit.

In terms of biological role, GTPase that plays an essential role in the late steps of ribosome biogenesis. The protein is GTPase Der of Natranaerobius thermophilus (strain ATCC BAA-1301 / DSM 18059 / JW/NM-WN-LF).